The primary structure comprises 444 residues: Cholecystokinin receptor type A (444 aa).

The Extracellular portion of the chain corresponds to 1 to 56 (MSHSPARQHLVESSRMDVVDSLLMNGSNITPPCELGLENETLFCLDQPQPSKEWQS). Asn-25 and Asn-39 each carry an N-linked (GlcNAc...) asparagine glycan. Cys-33 and Cys-44 are oxidised to a cystine. The helical transmembrane segment at 57 to 82 (ALQILLYSIIFLLSVLGNTLVITVLI) threads the bilayer. Over 83–92 (RNKRMRTVTN) the chain is Cytoplasmic. A helical transmembrane segment spans residues 93-119 (IFLLSLAVSDLMLCLFCMPFNLIPNLL). Topologically, residues 120-130 (KDFIFGSAVCK) are extracellular. Cysteines 129 and 211 form a disulfide. A helical transmembrane segment spans residues 131–152 (TTTYFMGTSVSVSTFNLVAISL). Residues 153-172 (ERYGAICRPLQSRVWQTKSH) lie on the Cytoplasmic side of the membrane. A helical transmembrane segment spans residues 173 to 193 (ALKVIAATWCLSFTIMTPYPI). Over 194–225 (YSNLVPFTKNNNQTANMCRFLLPSDAMQQSWQ) the chain is Extracellular. An N-linked (GlcNAc...) asparagine glycan is attached at Asn-205. A helical transmembrane segment spans residues 226 to 249 (TFLLLILFLLPGIVMVVAYGLISL). Residues 250–329 (ELYQGIKFDA…NLIAKKRVIR (80 aa)) are Cytoplasmic-facing. The disordered stretch occupies residues 263–288 (KSAKEKKPSTGSSTRYEDSDGCYLQK). The helical transmembrane segment at 330–350 (MLIVIVVLFFLCWMPIFSANA) threads the bilayer. At 351-365 (WRAYDTVSAEKHLSG) the chain is on the extracellular side. A helical membrane pass occupies residues 366–389 (TPISFILLLSYTSSCVNPIIYCFM). At 390-444 (NKRFRLGFMATFPCCPNPGPPGVRGEVGEEEDGRTIRALLSRYSYSHMSTSAPPP) the chain is on the cytoplasmic side. A lipid anchor (S-palmitoyl cysteine) is attached at Cys-403.

This sequence belongs to the G-protein coupled receptor 1 family. Pancreas and brain. Also expressed in the gastrointestinal system and vagus nerve.

Its subcellular location is the cell membrane. Functionally, receptor for cholecystokinin. Mediates pancreatic growth and enzyme secretion, smooth muscle contraction of the gall bladder and stomach. Has a 1000-fold higher affinity for CCK rather than for gastrin. It modulates feeding and dopamine-induced behavior in the central and peripheral nervous system. This receptor mediates its action by association with G proteins that activate a phosphatidylinositol-calcium second messenger system. The sequence is that of Cholecystokinin receptor type A (Cckar) from Rattus norvegicus (Rat).